The following is a 147-amino-acid chain: Large ribosomal subunit protein uL13 (147 aa).

It belongs to the universal ribosomal protein uL13 family. As to quaternary structure, part of the 50S ribosomal subunit.

Its function is as follows. This protein is one of the early assembly proteins of the 50S ribosomal subunit, although it is not seen to bind rRNA by itself. It is important during the early stages of 50S assembly. In Rhodococcus erythropolis (strain PR4 / NBRC 100887), this protein is Large ribosomal subunit protein uL13.